The sequence spans 143 residues: Nucleoside diphosphate kinase (143 aa).

Residues Lys-11, Phe-59, Arg-87, Thr-93, Arg-104, and Asn-114 each coordinate ATP. The active-site Pros-phosphohistidine intermediate is the His-117.

Belongs to the NDK family. Homotetramer. Mg(2+) serves as cofactor.

Its subcellular location is the cytoplasm. The catalysed reaction is a 2'-deoxyribonucleoside 5'-diphosphate + ATP = a 2'-deoxyribonucleoside 5'-triphosphate + ADP. It carries out the reaction a ribonucleoside 5'-diphosphate + ATP = a ribonucleoside 5'-triphosphate + ADP. Major role in the synthesis of nucleoside triphosphates other than ATP. The ATP gamma phosphate is transferred to the NDP beta phosphate via a ping-pong mechanism, using a phosphorylated active-site intermediate. This Citrobacter koseri (strain ATCC BAA-895 / CDC 4225-83 / SGSC4696) protein is Nucleoside diphosphate kinase.